The chain runs to 539 residues: Membrane protein insertase YidC (539 aa).

A helical membrane pass occupies residues 6-26 (NILLIALALVSFLLFQQWNVA). A compositionally biased stretch (polar residues) spans 35-44 (EQAQSGSTLP). The interval 35–55 (EQAQSGSTLPAPSYADDLDPA) is disordered. The next 4 membrane-spanning stretches (helical) occupy residues 341–361 (SFIQGIVVNWGLAIICLTFIV), 416–436 (LGGCLPILLQMPIFISLYWAL), 454–474 (LSAQDPYYILPLLMGASMFLI), and 495–515 (PVMFTFFFLFFPSGLVLYWLV).

The protein belongs to the OXA1/ALB3/YidC family. Type 1 subfamily. Interacts with the Sec translocase complex via SecD. Specifically interacts with transmembrane segments of nascent integral membrane proteins during membrane integration.

It localises to the cell inner membrane. Functionally, required for the insertion and/or proper folding and/or complex formation of integral membrane proteins into the membrane. Involved in integration of membrane proteins that insert both dependently and independently of the Sec translocase complex, as well as at least some lipoproteins. Aids folding of multispanning membrane proteins. The polypeptide is Membrane protein insertase YidC (Vibrio atlanticus (strain LGP32) (Vibrio splendidus (strain Mel32))).